The following is a 589-amino-acid chain: Parathyroid hormone/parathyroid hormone-related peptide receptor (589 aa).

Positions 1–28 are cleaved as a signal peptide; it reads MGAARIAPGLALLLCCPVLSSAYALVDA. The Extracellular portion of the chain corresponds to 29-188; the sequence is DDVMTKEEQI…REREVFDRLG (160 aa). 3 disulfide bridges follow: Cys-48-Cys-117, Cys-108-Cys-148, and Cys-131-Cys-170. Positions 64–105 are disordered; it reads ESDKGWASASTSGKPKKEKPSGKLHPESEEDKEVPTGSRPRG. Residues 81-90 are compositionally biased toward basic and acidic residues; that stretch reads EKPSGKLHPE. N-linked (GlcNAc...) asparagine glycans are attached at residues Asn-151, Asn-161, Asn-166, and Asn-176. The chain crosses the membrane as a helical span at residues 189–209; it reads MIYTVGYSVSLASLTVAVLIL. Over 210-223 the chain is Cytoplasmic; that stretch reads AYFRRLHCTRNYIH. The chain crosses the membrane as a helical span at residues 224–244; that stretch reads MHLFLSFMLRAVSIFVKDAVL. At 245–294 the chain is on the extracellular side; it reads YSGTALDEAERLTEEELRAIAQAPPPPAAAAGYVGCRVAVTFFLYFLATN. A helical transmembrane segment spans residues 295-315; the sequence is YYWILVEGLYLHSLIFMAFFS. Over 316-318 the chain is Cytoplasmic; that stretch reads EKK. The chain crosses the membrane as a helical span at residues 319-339; it reads YLWGFTVFGWGLPAIFVAVWV. Residues 340 to 360 are Extracellular-facing; sequence SVRATLANTGCWDLSSGNKKW. Residues 361–381 form a helical membrane-spanning segment; it reads IIQVPILASIVLNFILFINIV. Residues 382–404 lie on the Cytoplasmic side of the membrane; the sequence is RVLATKLRETNAGRCDTRQQYRK. The helical transmembrane segment at 405 to 425 threads the bilayer; that stretch reads LLKSTLVLMPLFGVHYIVFMA. Residues 426–439 lie on the Extracellular side of the membrane; that stretch reads TPYTEVSGTLWQVQ. A helical transmembrane segment spans residues 440–460; it reads MHYEMLFNSFQGFFVAIIYCF. Residues 461-589 are Cytoplasmic-facing; sequence CNGEVQAEIK…LLQEEWETVM (129 aa). The Important for interaction with G proteins motif lies at 473–476; the sequence is WSRW. Residues 524-549 are disordered; sequence AATTNGHPPLPGHTKSGSPALQATPP. A Phosphothreonine modification is found at Thr-547.

It belongs to the G-protein coupled receptor 2 family. Homodimer in the absence of bound ligand. Peptide hormone binding leads to dissociation of the homodimer. N-glycosylated.

Its subcellular location is the cell membrane. In terms of biological role, G-protein-coupled receptor for parathyroid hormone (PTH) and for parathyroid hormone-related peptide (PTHLH). Ligand binding causes a conformation change that triggers signaling via guanine nucleotide-binding proteins (G proteins) and modulates the activity of downstream effectors, such as adenylate cyclase (cAMP). PTH1R is coupled to G(s) G alpha proteins and mediates activation of adenylate cyclase activity. PTHLH dissociates from PTH1R more rapidly than PTH; as consequence, the cAMP response induced by PTHLH decays faster than the response induced by PTH. In Bos taurus (Bovine), this protein is Parathyroid hormone/parathyroid hormone-related peptide receptor (PTH1R).